The primary structure comprises 444 residues: Phosphoglucosamine mutase (444 aa).

Catalysis depends on serine 102, which acts as the Phosphoserine intermediate. The Mg(2+) site is built by serine 102, aspartate 239, aspartate 241, and aspartate 243. The residue at position 102 (serine 102) is a Phosphoserine.

The protein belongs to the phosphohexose mutase family. Mg(2+) serves as cofactor. In terms of processing, activated by phosphorylation.

It carries out the reaction alpha-D-glucosamine 1-phosphate = D-glucosamine 6-phosphate. Its function is as follows. Catalyzes the conversion of glucosamine-6-phosphate to glucosamine-1-phosphate. The chain is Phosphoglucosamine mutase from Mycolicibacterium paratuberculosis (strain ATCC BAA-968 / K-10) (Mycobacterium paratuberculosis).